Here is a 569-residue protein sequence, read N- to C-terminus: Falcipain-1 (569 aa).

Residues 1–35 are Cytoplasmic-facing; it reads MVAIKEMKEFAFARPSLVETLNKKKKFLKKKEKRT. The propeptide at 1–332 is activation peptide; sequence MVAIKEMKEF…KRNEKDIFSK (332 aa). A helical; Signal-anchor for type II membrane protein transmembrane segment spans residues 36–56; it reads FVLSIYAFITFIIFCIGILYF. Residues 57 to 569 lie on the Lumenal side of the membrane; that stretch reads TNKSSAHNNN…IGEEVFYPIL (513 aa). N-linked (GlcNAc...) asparagine glycans are attached at residues asparagine 58, asparagine 98, asparagine 121, and asparagine 127. A disordered region spans residues 97–118; sequence LNESSNEEDEEKYTLNSETYNN. Disulfide bonds link cysteine 354–cysteine 395, cysteine 388–cysteine 428, and cysteine 413–cysteine 433. Residue cysteine 357 is part of the active site. N-linked (GlcNAc...) asparagine glycosylation is found at asparagine 479 and asparagine 487. Cysteine 482 and cysteine 558 are disulfide-bonded. Active-site residues include histidine 488 and asparagine 533.

Belongs to the peptidase C1 family. Contains disulfide bonds.

The protein resides in the membrane. It localises to the cytoplasmic granule. Functionally, cysteine protease. In the mosquito midgut, required for parasite development. This is Falcipain-1 from Plasmodium falciparum (isolate 3D7).